The sequence spans 367 residues: MRPIKASISADAMAHNLRVARRHAGAARVFAVVKANAYGHGLSRALRAFGAADGFAVLTLEEAASLRQMGVDKPILLLEGIFDAGEIAACAELDLWPVLHHARQLDWLEQQRPARALEVFLKFDSGMHRLGFPLAEHAEVVARVRALAGVARVTLMTHFAQADDSAGVAWQLQPFREALDGHGLPWSSANSAALMRYPETVGDWVRPGIMLYGASPFTDVPASGLGLEPAMTLRSEIIAVQTLAAGEGIGYGQTFRADKPMRAGVVACGYADGYPRHAPTGTPVVVDGRRTRTLGRVSMDMLCVDLSECPAAGVGSAVVLWGDGLPVDDVAAAAGTSSYELLCALAPRVPIEEVGRNQEAGRGFGNE.

The Proton acceptor; specific for D-alanine role is filled by Lys34. Position 34 is an N6-(pyridoxal phosphate)lysine (Lys34). Arg129 serves as a coordination point for substrate. The active-site Proton acceptor; specific for L-alanine is Tyr251. Met299 provides a ligand contact to substrate.

Belongs to the alanine racemase family. The cofactor is pyridoxal 5'-phosphate.

The enzyme catalyses L-alanine = D-alanine. Its pathway is amino-acid biosynthesis; D-alanine biosynthesis; D-alanine from L-alanine: step 1/1. In terms of biological role, catalyzes the interconversion of L-alanine and D-alanine. May also act on other amino acids. The sequence is that of Alanine racemase (alr) from Thiobacillus denitrificans (strain ATCC 25259 / T1).